A 79-amino-acid chain; its full sequence is Aquaporin Z (79 aa).

Helical transmembrane passes span 4–24 and 33–53; these read LFAE…SAVF and IGFA…AYAV. The NPA 1 motif lies at 62–64; that stretch reads NPA.

This sequence belongs to the MIP/aquaporin (TC 1.A.8) family. As to quaternary structure, homotetramer.

It localises to the cell membrane. It carries out the reaction H2O(in) = H2O(out). In terms of biological role, channel that permits osmotically driven movement of water in both directions. It is involved in the osmoregulation and in the maintenance of cell turgor during volume expansion in rapidly growing cells. It mediates rapid entry or exit of water in response to abrupt changes in osmolarity. This Flavobacterium johnsoniae (Cytophaga johnsonae) protein is Aquaporin Z.